A 536-amino-acid chain; its full sequence is Probable serine/threonine-protein kinase DDB_G0268550 (536 aa).

In terms of domain architecture, Protein kinase spans 14 to 305; the sequence is EIIEKNYRKG…IDVLEIHPFL (292 aa). ATP-binding positions include 20-28 and Lys-51; that span reads YRKGGFSKI. Asp-147 serves as the catalytic Proton acceptor. The tract at residues 161 to 192 is disordered; the sequence is DNNNNNNNNNNNNNNNNNNNSNINDDNNNSNS.

The protein belongs to the protein kinase superfamily. Ser/Thr protein kinase family. Mg(2+) serves as cofactor.

It carries out the reaction L-seryl-[protein] + ATP = O-phospho-L-seryl-[protein] + ADP + H(+). The enzyme catalyses L-threonyl-[protein] + ATP = O-phospho-L-threonyl-[protein] + ADP + H(+). The sequence is that of Probable serine/threonine-protein kinase DDB_G0268550 from Dictyostelium discoideum (Social amoeba).